The chain runs to 484 residues: Arginine ADP-riboxanase OspC3 (484 aa).

His-143, Gln-144, Ser-145, Asn-155, Lys-157, Thr-169, Asn-172, and Thr-173 together coordinate NAD(+). Residue Glu-326 is part of the active site. ANK repeat units lie at residues 369–398, 413–444, and 451–480; these read MAHQALAYSLGNKKADIALYLLSKFNFTKQ, NLYDVEYLLSKDGANYKVLEYFINNGLVDVNK, and SGDTMLDNAMKSKDSKMIDFLLKNGAILGK.

The protein belongs to the OspC family. Interacts with host calmodulin (CALM1, CALM2 and/or CALM3); specifically interacts with the apo form of calmodulin, preventing calcium-binding.

It is found in the secreted. The protein localises to the host cytoplasm. The enzyme catalyses L-arginyl-[protein] + NAD(+) = ADP-riboxanated L-argininyl-[protein] + nicotinamide + NH4(+) + H(+). Its activity is regulated as follows. Interaction with host calmodulin (CALM1, CALM2 and/or CALM3) is required to mediate arginine ADP-riboxanation of host caspases. Its function is as follows. ADP-riboxanase effector that inhibits host cell pyroptosis. Acts by mediating arginine ADP-riboxanation of host CASP4/CASP11, blocking CASP4/CASP11 autoprocessing. This prevents CASP4 activation and ability to recognize and cleave GSDMD, thereby inhibiting LPS-induced pyroptosis. ADP-riboxanation takes place in two steps: OspC3 first catalyzes ADP-ribosylation of target Arg, and then initiates a deamination to remove one N-omega group. Independently of its ADP-riboxanase activity, acts as an inhibitor of calcium signaling by inhibiting host calmodulin, preventing activation of the JAK-STAT signaling pathway in response to interferon-beta. Mechanistically, acts by binding to the apo form of calmodulin, preventing calcium-binding and ability to activate host CaMK2 (CAMKII), which is required to stimulate the JAK-STAT signaling pathway in response to interferon-beta. This Shigella flexneri protein is Arginine ADP-riboxanase OspC3.